Consider the following 216-residue polypeptide: Ribosomal RNA small subunit methyltransferase G (216 aa).

Residues glycine 81, leucine 86, 132 to 133, and arginine 147 each bind S-adenosyl-L-methionine; that span reads VE.

The protein belongs to the methyltransferase superfamily. RNA methyltransferase RsmG family.

It is found in the cytoplasm. It carries out the reaction guanosine(527) in 16S rRNA + S-adenosyl-L-methionine = N(7)-methylguanosine(527) in 16S rRNA + S-adenosyl-L-homocysteine. Functionally, specifically methylates the N7 position of guanine in position 527 of 16S rRNA. In Hydrogenovibrio crunogenus (strain DSM 25203 / XCL-2) (Thiomicrospira crunogena), this protein is Ribosomal RNA small subunit methyltransferase G.